Consider the following 86-residue polypeptide: Tryptophan-containing weak neurotoxin (86 aa).

Positions 1 to 21 are cleaved as a signal peptide; that stretch reads MKTLLLTLVVVTIVCLDLGYT. Intrachain disulfides connect C24-C45, C27-C32, C38-C63, C67-C78, and C79-C84.

The protein belongs to the three-finger toxin family. Ancestral subfamily. Orphan group II sub-subfamily. As to quaternary structure, monomer in solution. Post-translationally, the disulfide bond Cys-27-Cys-32 is probably not needed for efficient interaction of the toxin with the target receptor (Torpedo muscle or alpha-7/CHRNA7 nAChR). Expressed by the venom gland.

The protein resides in the secreted. Its function is as follows. Neurotoxin that irreversibly inhibits nicotinic acetylcholine receptors (nAChR) and allosterically interacts with muscarinic acetylcholine receptors (mAChR). The loop II is involved in the interaction of this toxin with nAChR and mAChR. On nAChR, it acts as a competitive antagonist (muscle-type and alpha-7/CHRNA7) with IC(50) values in the micromolar range. On mAChR, in presence of ACh, it partially inhibits the effect of acetylcholine (ACh) (allosteric antagonist), whereas in the absence of ACh, it activates the receptor (allosteric agonist). It also shows a very weak inhibition of GABA(A) receptor composed of alpha-1-beta-3-gamma-2 (GABRA1 and GABRB3 and GABRG2) subunits (10 uM inhibit 31% current). In vivo, is nonlethal to mice at concentrations up to 20 mg/kg, but exerts a myorelaxant effect, induces a dose-dependent decrease in blood pressure and an increase in heart rate in mice and rats. The polypeptide is Tryptophan-containing weak neurotoxin (Naja kaouthia (Monocled cobra)).